The following is a 247-amino-acid chain: NAD-dependent protein deacetylase 2 (247 aa).

The Deacetylase sirtuin-type domain occupies 1 to 247 (MDQIRQLAQW…ASVRKQIQAE (247 aa)). NAD(+)-binding residues include Ala23, Thr27, Phe34, Arg35, Gln103, Ile105, Asp106, and His121. Residue Phe34 participates in nicotinamide binding. Residues Ile105 and Asp106 each coordinate nicotinamide. His121 (proton acceptor) is an active-site residue. Positions 129, 132, 149, and 152 each coordinate Zn(2+). Thr188, Ser189, Asn215, and Ile233 together coordinate NAD(+).

Belongs to the sirtuin family. Class U subfamily. It depends on Zn(2+) as a cofactor.

Its subcellular location is the cytoplasm. It carries out the reaction N(6)-acetyl-L-lysyl-[protein] + NAD(+) + H2O = 2''-O-acetyl-ADP-D-ribose + nicotinamide + L-lysyl-[protein]. Functionally, NAD-dependent protein deacetylase which modulates the activities of several enzymes which are inactive in their acetylated form. This is NAD-dependent protein deacetylase 2 from Geobacillus kaustophilus (strain HTA426).